We begin with the raw amino-acid sequence, 524 residues long: GMP synthase [glutamine-hydrolyzing] (524 aa).

One can recognise a Glutamine amidotransferase type-1 domain in the interval 5–195 (KVIVIDFGGQ…VRGVCGCAGT (191 aa)). Residue Cys-82 is the Nucleophile of the active site. Residues His-169 and Glu-171 contribute to the active site. One can recognise a GMPS ATP-PPase domain in the interval 196–389 (WKMDAFVENT…LGIPEHLVFR (194 aa)). 223-229 (SGGVDSS) serves as a coordination point for ATP.

In terms of assembly, homodimer.

It carries out the reaction XMP + L-glutamine + ATP + H2O = GMP + L-glutamate + AMP + diphosphate + 2 H(+). The protein operates within purine metabolism; GMP biosynthesis; GMP from XMP (L-Gln route): step 1/1. Catalyzes the synthesis of GMP from XMP. This is GMP synthase [glutamine-hydrolyzing] from Lachnospira eligens (strain ATCC 27750 / DSM 3376 / VPI C15-48 / C15-B4) (Eubacterium eligens).